A 463-amino-acid polypeptide reads, in one-letter code: Eukaryotic translation initiation factor 3 subunit E (463 aa).

In terms of domain architecture, PCI spans 224-407 (FNLGENQGCQ…NMLHITRPHA (184 aa)). The tract at residues 432-463 (QSSVGEPRERGERGERGNKGGRGRPRTQEVAA) is disordered. Positions 437 to 449 (EPRERGERGERGN) are enriched in basic and acidic residues.

Belongs to the eIF-3 subunit E family. Component of the eukaryotic translation initiation factor 3 (eIF-3) complex.

It is found in the cytoplasm. Its function is as follows. Component of the eukaryotic translation initiation factor 3 (eIF-3) complex, which is involved in protein synthesis of a specialized repertoire of mRNAs and, together with other initiation factors, stimulates binding of mRNA and methionyl-tRNAi to the 40S ribosome. The eIF-3 complex specifically targets and initiates translation of a subset of mRNAs involved in cell proliferation. The protein is Eukaryotic translation initiation factor 3 subunit E of Cryptococcus neoformans var. neoformans serotype D (strain JEC21 / ATCC MYA-565) (Filobasidiella neoformans).